Consider the following 217-residue polypeptide: MKFSFAALASAMLLTSTAAFAGIVTSSSNIDFLAIDGQKANKDLLKSTKSFNINESQTHQVVVRVSEIVRHGSDRSLYESDPIVVTFQGTNEDVVISAPKLENERDIKNFKDSPSVIVKTNSGRIIATKQEILKQEGFLPGANLIDTLSEYNASGSVASVSSFATAMPAVALGFTKAQKGKVVVQGENIAEQQLQFWFQQADKETQVRFLNWAKNQK.

A signal peptide spans 1–21 (MKFSFAALASAMLLTSTAAFA).

The protein belongs to the UPF0319 family.

The chain is UPF0319 protein HS_1349 from Histophilus somni (strain 129Pt) (Haemophilus somnus).